The primary structure comprises 131 residues: D-ribose pyranase (131 aa).

Histidine 20 (proton donor) is an active-site residue. Substrate contacts are provided by residues aspartate 28, histidine 98, and 120–122; that span reads YAN.

Belongs to the RbsD / FucU family. RbsD subfamily. In terms of assembly, homodecamer.

The protein localises to the cytoplasm. The catalysed reaction is beta-D-ribopyranose = beta-D-ribofuranose. It participates in carbohydrate metabolism; D-ribose degradation; D-ribose 5-phosphate from beta-D-ribopyranose: step 1/2. In terms of biological role, catalyzes the interconversion of beta-pyran and beta-furan forms of D-ribose. The chain is D-ribose pyranase from Clostridium botulinum (strain Eklund 17B / Type B).